The chain runs to 1186 residues: MEPDVSIETLSIIRIAVLPIGTIPPTLLRDYHSMLLRHHTIALSAISSFYTEHQKSPFTNQPWDSGSLRFKFVLGGSPPSPWEDFQSNRKMLAVIGLCHCPSSPDLDSVTEKFNVACKSYSSALVRRCFAFSPGDSQLEDGDKKGENLILFPPSDKQTQEFHLQTMMQDIAASLLMEFEKWVLQAESAGTILKTPLDSQASLNSEEVIKAKKRRLGRAQKTIGDYSLLAGSPVDANAHYSTALELARLTGDYFWYAGALEGSVCALLVDRMGQRDVALEDEVRYRYTNVILHYRKSFIQEIAQRVSPLSFELEATLKLARFLCRRELAKEVVELLTNAADGAKSLIDASDRLILYVEVARLFGALGYQRKAAFFCRQVAQLYLQQDNRLAAISAMQVLSMTTDAYRIQSRASMSKVSVNNETGRLPDAGKMHHHSIVSLFESHWSTLQMVVLREILLSAVRAGDPLAAWSAAARLLRWHYPLITPSGQNGLANSLANSADRLPSGTRCADPALPFVRLFSFPLHSSQVDIVKRNPAREDWWTGSAPSGPFIYTPFSKGDANESSKQELIWVVGEPVQVLVELANPCCFDLRIDSIYLSAHSSNFDAFPVSVDIPPNSAKVITLSGIPTAVGPVTIPGCTVHCFGVITEHVFRDVDNLLLGAAQGLVFSDPFRSCGSAKLRHVFVPNISVAPPLPLLVANVVGGDGAIILYEGEIREVCINFANAGTVPIVQAHVSLSGKNQDAVISIADEALQSALPLKPGAQVTLPVTLKAWHVGPTDSDNTMSSGRNAAGNTGRPKDGTSPSLLIHYAGPLSNNGDSQEKESIVPPGRRLVVPLQICVLQGLSFVKARLLSMEIPAHVSDNLRDEDIERESNADSLVKINPFRGSWGLRFLELELSNPTDVVFEISVFVQLENSAKEDDSSPVQDSPEYEYPKTRIDRDYSARVLIPLEHFKLPVLDGSFFTKDPPPGSPSSSRNPSFSEKNTKAEINTLIKNLISKIKVRWQSGRNSSGELDIKDAIQTALQTTVMDVLLPDPLTFGFRLVRNGLEKDPETKAESPFSKGSVLSHEVTPMEVLVRNNTSEAIKLNLSVTCRDVAGQNCTEGADATVLWAGALSGISMEVAPLQEARHCFSLFFLVPGEYTMVAAAVIEDANNVLRARAGTASPNEPIFCRGPPFHVCVAGGAL.

Disordered regions lie at residues 777–824 and 964–984; these read PTDS…EKES and TKDPPPGSPSSSRNPSFSEKN. Over residues 779–792 the composition is skewed to polar residues; the sequence is DSDNTMSSGRNAAG. At S971 the chain carries Phosphoserine. A compositionally biased stretch (low complexity) spans 972 to 981; sequence PSSSRNPSFS.

It belongs to the TRS120 family. In terms of assembly, part of the multisubunit TRAPP (transport protein particle) II complex composed of BET3, BET5, TRS20, TRS23, TRS31, TRS33, TRS65, TRS85, TRS120 and TRS130. In terms of tissue distribution, expressed in roots, leaves, stems and flowers.

It is found in the golgi apparatus. It localises to the trans-Golgi network. The protein localises to the early endosome. Its function is as follows. Specific subunit of the TRAPP II complex, a highly conserved vesicle tethering complex that is required for the proper transport of proteins in post-Golgi trafficking pathways to the growing cell plate in mitotic active cells. Required for the polarized and selective transport of PIN2 and probably PIN1 to the plasma membrane. Not required for ER-to-Golgi as well as biosynthetic and endocytic vacuolar transport. In Arabidopsis thaliana (Mouse-ear cress), this protein is Trafficking protein particle complex II-specific subunit 120 homolog.